Consider the following 487-residue polypeptide: F-box/LRR-repeat protein At1g48400 (487 aa).

The F-box domain maps to arginine 9–serine 57. 6 LRR repeats span residues serine 71–arginine 97, histidine 125–alanine 153, serine 174–aspartate 199, threonine 225–serine 251, threonine 327–serine 358, and asparagine 359–glycine 384.

This Arabidopsis thaliana (Mouse-ear cress) protein is F-box/LRR-repeat protein At1g48400.